The chain runs to 181 residues: Peptidyl-tRNA hydrolase (181 aa).

Y14 provides a ligand contact to tRNA. H19 acts as the Proton acceptor in catalysis. Residues Y62, N64, and N108 each contribute to the tRNA site.

It belongs to the PTH family. As to quaternary structure, monomer.

The protein localises to the cytoplasm. The enzyme catalyses an N-acyl-L-alpha-aminoacyl-tRNA + H2O = an N-acyl-L-amino acid + a tRNA + H(+). Its function is as follows. Hydrolyzes ribosome-free peptidyl-tRNAs (with 1 or more amino acids incorporated), which drop off the ribosome during protein synthesis, or as a result of ribosome stalling. Functionally, catalyzes the release of premature peptidyl moieties from peptidyl-tRNA molecules trapped in stalled 50S ribosomal subunits, and thus maintains levels of free tRNAs and 50S ribosomes. This chain is Peptidyl-tRNA hydrolase, found in Campylobacter jejuni (strain RM1221).